Consider the following 1432-residue polypeptide: ABC transporter asL7 (1432 aa).

The span at methionine 1–threonine 20 shows a compositional bias: polar residues. The interval methionine 1–proline 36 is disordered. Positions leucine 91–serine 341 constitute an ABC transporter 1 domain. Residue asparagine 265 is glycosylated (N-linked (GlcNAc...) asparagine). Helical transmembrane passes span proline 450 to phenylalanine 470, valine 484 to leucine 504, valine 530 to phenylalanine 550, glycine 559 to phenylalanine 579, methionine 597 to isoleucine 617, and isoleucine 702 to tyrosine 722. The 244-residue stretch at phenylalanine 786–alanine 1029 folds into the ABC transporter 2 domain. An ATP-binding site is contributed by glycine 822–threonine 829. An N-linked (GlcNAc...) asparagine glycan is attached at asparagine 1017. A disordered region spans residues leucine 1076 to glutamate 1095. The next 6 helical transmembrane spans lie at phenylalanine 1135–serine 1155, valine 1166–isoleucine 1186, isoleucine 1215–leucine 1235, leucine 1251–isoleucine 1271, alanine 1279–isoleucine 1299, and leucine 1317–alanine 1337. Asparagine 1371 is a glycosylation site (N-linked (GlcNAc...) asparagine). Residues phenylalanine 1402 to valine 1422 form a helical membrane-spanning segment.

The protein belongs to the ABC transporter superfamily. ABCG family. PDR (TC 3.A.1.205) subfamily.

The protein resides in the cell membrane. In terms of biological role, ABC transporter; part of the gene cluster that mediates the biosynthesis of xenovulene A, an unusual meroterpenoid that has potent inhibitory effects on the human gamma-aminobutyrate A (GABAA) benzodiazepine receptor. In Sarocladium schorii (Acremonium strictum (strain IMI 501407)), this protein is ABC transporter asL7.